The sequence spans 415 residues: Tyrosine--tRNA ligase (415 aa).

The 'HIGH' region signature appears at 54 to 63 (PTGSNIHLGH). The 'KMSKS' region signature appears at 248–252 (KMSKT). Lysine 251 is a binding site for ATP. One can recognise an S4 RNA-binding domain in the interval 351-415 (AKAFYLMSAV…GKKTFRRLTA (65 aa)).

This sequence belongs to the class-I aminoacyl-tRNA synthetase family. TyrS type 2 subfamily. In terms of assembly, homodimer.

The protein localises to the cytoplasm. It catalyses the reaction tRNA(Tyr) + L-tyrosine + ATP = L-tyrosyl-tRNA(Tyr) + AMP + diphosphate + H(+). Its function is as follows. Catalyzes the attachment of tyrosine to tRNA(Tyr) in a two-step reaction: tyrosine is first activated by ATP to form Tyr-AMP and then transferred to the acceptor end of tRNA(Tyr). In Synechococcus sp. (strain CC9902), this protein is Tyrosine--tRNA ligase.